We begin with the raw amino-acid sequence, 890 residues long: Calcium-transporting ATPase (890 aa).

Residues methionine 1–serine 47 lie on the Cytoplasmic side of the membrane. Residues alanine 48–threonine 68 traverse the membrane as a helical segment. Over leucine 69–valine 78 the chain is Extracellular. A helical membrane pass occupies residues aspartate 79–arginine 99. The Cytoplasmic segment spans residues arginine 100–leucine 238. Residues glutamate 239 to alanine 258 traverse the membrane as a helical segment. Over valine 259–methionine 270 the chain is Extracellular. A helical membrane pass occupies residues phenylalanine 271–alanine 288. The Ca(2+) site is built by valine 279, alanine 280, isoleucine 282, and glutamate 284. Residues isoleucine 289–isoleucine 688 lie on the Cytoplasmic side of the membrane. Aspartate 326 serves as the catalytic 4-aspartylphosphate intermediate. Aspartate 633 and aspartate 637 together coordinate Mg(2+). A helical transmembrane segment spans residues arginine 689–phenylalanine 708. 2 residues coordinate Ca(2+): asparagine 699 and glutamate 702. The Extracellular portion of the chain corresponds to alanine 709–leucine 718. Residues valine 719–glycine 739 traverse the membrane as a helical segment. Positions 727, 730, and 731 each coordinate Ca(2+). Topologically, residues methionine 740–valine 759 are cytoplasmic. Residues phenylalanine 760–alanine 782 traverse the membrane as a helical segment. The Extracellular portion of the chain corresponds to phenylalanine 783–glutamine 798. A helical transmembrane segment spans residues threonine 799–serine 818. Over glutamate 819 to asparagine 830 the chain is Cytoplasmic. The helical transmembrane segment at leucine 831–tyrosine 849 threads the bilayer. Residues tyrosine 850–proline 864 lie on the Extracellular side of the membrane. A helical transmembrane segment spans residues glycine 865 to leucine 885. Over leucine 886–lysine 890 the chain is Cytoplasmic.

Belongs to the cation transport ATPase (P-type) (TC 3.A.3) family. Type IIA subfamily. Phosphorylated in a Ca(2+)-dependent manner starting 4 hours after shifting to sporulation medium.

The protein resides in the cell membrane. The enzyme catalyses Ca(2+)(in) + ATP + H2O = Ca(2+)(out) + ADP + phosphate + H(+). Its function is as follows. This magnesium-dependent enzyme catalyzes the hydrolysis of ATP coupled with the transport of calcium. The polypeptide is Calcium-transporting ATPase (yloB) (Bacillus subtilis (strain 168)).